A 97-amino-acid polypeptide reads, in one-letter code: U-scoloptoxin(10)-Ssd2a (97 aa).

Residues 1–23 (MNKSMLIFFTILFLTYIIEEKEA) form the signal peptide.

Post-translationally, contains 3 disulfide bonds. As to expression, expressed by the venom gland.

The protein resides in the secreted. The protein is U-scoloptoxin(10)-Ssd2a of Scolopendra dehaani (Thai centipede).